Consider the following 688-residue polypeptide: Sodium channel and clathrin linker 1 (688 aa).

Ala2 carries the post-translational modification N-acetylalanine. A coiled-coil region spans residues 59–673; the sequence is LIAEYEKHLE…SASQQLSVIT (615 aa). Ser681 is modified (phosphoserine).

As to quaternary structure, interacts with SCN10A and clathrin. Identified in a complex containing SCN10A, clathrin and SCLT1. As to expression, detected in small neurons in dorsal root ganglia. Detected in C-type fibers of sciatic nerve (at protein level).

It is found in the cytoplasm. The protein resides in the cytoskeleton. Its subcellular location is the microtubule organizing center. It localises to the centrosome. The protein localises to the centriole. In terms of biological role, adapter protein that links SCN10A to clathrin. Regulates SCN10A channel activity, possibly by promoting channel internalization. This is Sodium channel and clathrin linker 1 (Sclt1) from Rattus norvegicus (Rat).